A 314-amino-acid polypeptide reads, in one-letter code: tRNA-cytidine(32) 2-sulfurtransferase (314 aa).

The PP-loop motif signature appears at 49 to 54 (SGGKDS). Residues Cys-124, Cys-127, and Cys-215 each contribute to the [4Fe-4S] cluster site.

Belongs to the TtcA family. As to quaternary structure, homodimer. It depends on Mg(2+) as a cofactor. [4Fe-4S] cluster serves as cofactor.

Its subcellular location is the cytoplasm. It carries out the reaction cytidine(32) in tRNA + S-sulfanyl-L-cysteinyl-[cysteine desulfurase] + AH2 + ATP = 2-thiocytidine(32) in tRNA + L-cysteinyl-[cysteine desulfurase] + A + AMP + diphosphate + H(+). Its pathway is tRNA modification. In terms of biological role, catalyzes the ATP-dependent 2-thiolation of cytidine in position 32 of tRNA, to form 2-thiocytidine (s(2)C32). The sulfur atoms are provided by the cysteine/cysteine desulfurase (IscS) system. In Histophilus somni (strain 2336) (Haemophilus somnus), this protein is tRNA-cytidine(32) 2-sulfurtransferase.